The following is a 475-amino-acid chain: MLLSDLSSDQEATGSNSHGGGGGDRMVVGSHGAAHVVLSNLFLPPAAAAAATMLLPAAPVMVRPAAMAAAQEPRAKKKRSLPGNPDPEAEVIALSPRALVATNRFVCEVCNKGFQRDQNLQLHRRGHNLPWKLRHRAAAVSAVTTAAPAPRKRVYVCPEPTCVHHDPARALGDLTGIKKHFSRKHGEKRWRCERCGKRYAVHSDWKAHVKNCGTREYRCDCGILFSRKDSLLTHRAFCDALAEESARLLAAANNSSSITTTTCNNSNISSNNNNNNINSISNSNNLLITSSSSSPPLFLPFSTTPAENPNPNQLLFLQQHQAAHHQLLLPQFQQPPSSPPAYFDHLAFGGGGGVITGSSCNDDNSSIAGDVMVAAGGDSVSFGLTSEGSVTMHAGDVGRRRLTRDFLGVDHDAGEVDELELDELPADLSTTAAACQGCNFAAATTAACCATDFTTGSRQYLGRLPPVNETWSHNF.

Over residues 1–16 the composition is skewed to polar residues; that stretch reads MLLSDLSSDQEATGSN. The tract at residues 1–26 is disordered; sequence MLLSDLSSDQEATGSNSHGGGGGDRM. C2H2-type zinc fingers lie at residues 105 to 127 and 155 to 185; these read FVCEVCNKGFQRDQNLQLHRRGH and YVCPEPTCVHHDPARALGDLTGIKKHFSRKH. 2 short sequence motifs (nuclear localization signal) span residues 123–130 and 177–184; these read HRRGHNLP and IKKHFSRK. The segment at 190–213 adopts a C2H2-type 2; degenerate zinc-finger fold; sequence WRCERCGKRYAVHSDWKAHVKNCG. Zn(2+) contacts are provided by Cys192, Cys195, His208, Cys212, Cys219, Cys221, His234, and Cys238. The CCHC-type 2; atypical zinc-finger motif lies at 217-240; the sequence is YRCDCGILFSRKDSLLTHRAFCDA. Residues 227-239 form an SHR-binding region; the sequence is RKDSLLTHRAFCD.

In terms of tissue distribution, mostly expressed in developing leaves (more in sheaths than in blades, especially in the outer epidermal cell of immature leaves and in the region immediately beneath the meristem where internodes are visible) and panicles, and, at very low levels, around the shoot apex and in roots.

The protein localises to the nucleus. Functionally, transcription activator that acts as a flowering master switch in both long and short days, independently of the circadian clock. Promotes flowering upstream of HD1 by up-regulating FTL1, FTL4, FTL5, FTL6, EHD1, HD3A and RFT1. Seems to repress FTL11 expression. May recognize the consensus motif 5'-TTTGTCGTAAT-3' in target gene promoters. The polypeptide is Protein EARLY HEADING DATE 2 (Oryza sativa subsp. japonica (Rice)).